Here is a 113-residue protein sequence, read N- to C-terminus: MAKRNFTPKDILQKEFKPKMRGYDPADVDGFLDNVIKDYESFTKDNQQLSDENERLRAKVDELTKQVAVGATSPSSQPTSTVTNMDILKRLSNLERHVFGAQLDNNQNESHRL.

A coiled-coil region spans residues L32–A71.

The protein belongs to the GpsB family. In terms of assembly, forms polymers through the coiled coil domains. Interacts with PBP1, MreC and EzrA.

It localises to the cytoplasm. Its function is as follows. Divisome component that associates with the complex late in its assembly, after the Z-ring is formed, and is dependent on DivIC and PBP2B for its recruitment to the divisome. Together with EzrA, is a key component of the system that regulates PBP1 localization during cell cycle progression. Its main role could be the removal of PBP1 from the cell pole after pole maturation is completed. Also contributes to the recruitment of PBP1 to the division complex. Not essential for septum formation. In Lactiplantibacillus plantarum (strain ATCC BAA-793 / NCIMB 8826 / WCFS1) (Lactobacillus plantarum), this protein is Cell cycle protein GpsB.